We begin with the raw amino-acid sequence, 144 residues long: Cytochrome c oxidase subunit 4 isoform 1, mitochondrial (144 aa).

Residues 1–73 are Mitochondrial matrix-facing; it reads SVVKSEDFSL…SFAEMNRGSN (73 aa). Lysine 4 is modified (N6-acetyllysine; alternate). At lysine 4 the chain carries N6-succinyllysine; alternate. N6-acetyllysine is present on lysine 28. Phosphoserine occurs at positions 31 and 33. Lysine 35 carries the post-translational modification N6-acetyllysine; alternate. At lysine 35 the chain carries N6-succinyllysine; alternate. Lysine 42 carries the N6-acetyllysine modification. The chain crosses the membrane as a helical span at residues 74–99; the sequence is EWKTVVGGAMFFIGFTALVIMWQKHY. At 100–144 the chain is on the mitochondrial intermembrane side; that stretch reads VYGPLPQSFDKEWVAKQTKRMLDMKVNPIQGLASKWDYEKNEWKK.

This sequence belongs to the cytochrome c oxidase IV family. As to quaternary structure, component of the cytochrome c oxidase (complex IV, CIV), a multisubunit enzyme composed of 14 subunits. The complex is composed of a catalytic core of 3 subunits MT-CO1, MT-CO2 and MT-CO3, encoded in the mitochondrial DNA, and 11 supernumerary subunits COX4I, COX5A, COX5B, COX6A, COX6B, COX6C, COX7A, COX7B, COX7C, COX8 and NDUFA4, which are encoded in the nuclear genome. The complex exists as a monomer or a dimer and forms supercomplexes (SCs) in the inner mitochondrial membrane with NADH-ubiquinone oxidoreductase (complex I, CI) and ubiquinol-cytochrome c oxidoreductase (cytochrome b-c1 complex, complex III, CIII), resulting in different assemblies (supercomplex SCI(1)III(2)IV(1) and megacomplex MCI(2)III(2)IV(2)). Interacts with PHB2; the interaction decreases in absence of SPHK2. Interacts with AFG1L. Interacts with ABCB7; this interaction allows the regulation of cellular iron homeostasis and cellular reactive oxygen species (ROS) levels in cardiomyocytes. Interacts with FLVCR2; this interaction occurs in the absence of heme and is disrupted upon heme binding. Interacts with IRGC.

The protein resides in the mitochondrion inner membrane. It functions in the pathway energy metabolism; oxidative phosphorylation. Its function is as follows. Component of the cytochrome c oxidase, the last enzyme in the mitochondrial electron transport chain which drives oxidative phosphorylation. The respiratory chain contains 3 multisubunit complexes succinate dehydrogenase (complex II, CII), ubiquinol-cytochrome c oxidoreductase (cytochrome b-c1 complex, complex III, CIII) and cytochrome c oxidase (complex IV, CIV), that cooperate to transfer electrons derived from NADH and succinate to molecular oxygen, creating an electrochemical gradient over the inner membrane that drives transmembrane transport and the ATP synthase. Cytochrome c oxidase is the component of the respiratory chain that catalyzes the reduction of oxygen to water. Electrons originating from reduced cytochrome c in the intermembrane space (IMS) are transferred via the dinuclear copper A center (CU(A)) of subunit 2 and heme A of subunit 1 to the active site in subunit 1, a binuclear center (BNC) formed by heme A3 and copper B (CU(B)). The BNC reduces molecular oxygen to 2 water molecules using 4 electrons from cytochrome c in the IMS and 4 protons from the mitochondrial matrix. This Pan troglodytes (Chimpanzee) protein is Cytochrome c oxidase subunit 4 isoform 1, mitochondrial (COX4I1).